The following is a 310-amino-acid chain: Uridine phosphorylase 1 (310 aa).

Residues glycine 60, arginine 94, and 138–141 contribute to the phosphate site; that span reads RIGT. Uridine contacts are provided by residues 142–143 and 217–219; these read SG and QGR.

It belongs to the PNP/UDP phosphorylase family. As to quaternary structure, homodimer.

It carries out the reaction uridine + phosphate = alpha-D-ribose 1-phosphate + uracil. The enzyme catalyses 2'-deoxyuridine + phosphate = 2-deoxy-alpha-D-ribose 1-phosphate + uracil. It participates in pyrimidine metabolism; UMP biosynthesis via salvage pathway; uracil from uridine (phosphorylase route): step 1/1. Its function is as follows. Catalyzes the reversible phosphorylytic cleavage of uridine to uracil and ribose-1-phosphate which can then be utilized as carbon and energy sources or in the rescue of pyrimidine bases for nucleotide synthesis. Shows broad substrate specificity and can also accept deoxyuridine and other analogous compounds. This chain is Uridine phosphorylase 1, found in Homo sapiens (Human).